The sequence spans 469 residues: Properdin (469 aa).

The N-terminal stretch at 1-27 is a signal peptide; it reads MITEGAQAPRLLLPPLLLLLTLPATGS. TSP type-1 domains are found at residues 28 to 76, 77 to 134, 136 to 191, 193 to 255, 257 to 313, 315 to 377, and 379 to 462; these read DPVL…QPCR, SPRW…QCCP, MGGW…QSCP, HGAW…PPCP, AGSW…VPCP, DGEW…QHCP, and KGSW…PACK. 3 disulfide bridges follow: cysteine 32-cysteine 56, cysteine 43-cysteine 72, and cysteine 57-cysteine 75. C-linked (Man) tryptophan glycosylation is found at tryptophan 83 and tryptophan 86. Disulfide bonds link cysteine 89/cysteine 127, cysteine 93/cysteine 133, cysteine 104/cysteine 111, cysteine 132/cysteine 170, cysteine 148/cysteine 184, cysteine 152/cysteine 190, and cysteine 163/cysteine 174. Residues tryptophan 139, tryptophan 142, and tryptophan 145 are each glycosylated (C-linked (Man) tryptophan). Threonine 151 carries an O-linked (Fuc...) threonine glycan. C-linked (Man) tryptophan glycosylation is found at tryptophan 196, tryptophan 199, and tryptophan 202. Cystine bridges form between cysteine 205-cysteine 248, cysteine 209-cysteine 254, and cysteine 224-cysteine 238. Residue serine 208 is glycosylated (O-linked (Fuc...) serine). A disordered region spans residues 218 to 238; it reads ETRSRKCSAPEPSQKPPGKPC. C-linked (Man) tryptophan glycosylation is found at tryptophan 260 and tryptophan 263. Cystine bridges form between cysteine 269–cysteine 306, cysteine 273–cysteine 312, and cysteine 284–cysteine 296. An O-linked (Fuc...) threonine glycan is attached at threonine 272. 2 C-linked (Man) tryptophan glycosylation sites follow: tryptophan 321 and tryptophan 324. 3 disulfides stabilise this stretch: cysteine 327-cysteine 370, cysteine 337-cysteine 376, and cysteine 350-cysteine 360. An interaction with Complement C3 beta chain region spans residues 351–359; the sequence is KGRKFDGHR. C-linked (Man) tryptophan glycosylation is found at tryptophan 382, tryptophan 385, and tryptophan 388. Intrachain disulfides connect cysteine 391–cysteine 455, cysteine 395–cysteine 461, and cysteine 407–cysteine 439. N-linked (GlcNAc...) asparagine glycosylation is present at asparagine 428.

As to quaternary structure, in plasma, properdin exists as dimers, trimers or tetramers in the relative proportions of 26:54:20. Interacts with the pro-C3-convertase enzyme complex (C3b-Bb) comprised of Complement C3 beta chain (C3b) and the Complement factor B Bb fragment (Bb), where it binds (via its TSP type-1 5 domain) with C3b and Bb. This interaction stabilizes the complex and allows it to become the active C3-convertase enzyme complex (C3b-Bb-FP). Interacts with C3b. Interacts with CFB.

It is found in the secreted. Functionally, a positive regulator of the alternate pathway of complement. It binds to and stabilizes the C3- and C5-convertase enzyme complexes. Inhibits CFI-CFH mediated degradation of Inhibits CFI-CFH mediated degradation of Complement C3 beta chain (C3b). The polypeptide is Properdin (CFP) (Pongo abelii (Sumatran orangutan)).